Reading from the N-terminus, the 200-residue chain is MTIRYPNGKRYDQASQPHKTPIKKHTYSNRGMSLEEELNDTNQYYLTHNIACVHKKPTPLQIVKVDYPARSAAVVKEAYFKQPSTTDYNGVYKGKYIDFEAKETKNKTSFPLQNFHLHQIEHMKQVVAHNGIAFVIIKFTLFDEFYLLDAKHIIAFWNRQNTGGRKSITKQEIEEHGSLLSCGYHPRIDYIRVLDTVYFS.

A disordered region spans residues 1-24 (MTIRYPNGKRYDQASQPHKTPIKK). 4 residues coordinate Mg(2+): Thr-85, Asp-87, Glu-100, and Gln-119.

This sequence belongs to the RecU family. Mg(2+) is required as a cofactor.

The protein resides in the cytoplasm. It carries out the reaction Endonucleolytic cleavage at a junction such as a reciprocal single-stranded crossover between two homologous DNA duplexes (Holliday junction).. Endonuclease that resolves Holliday junction intermediates in genetic recombination. Cleaves mobile four-strand junctions by introducing symmetrical nicks in paired strands. Promotes annealing of linear ssDNA with homologous dsDNA. Required for DNA repair, homologous recombination and chromosome segregation. In Bacillus mycoides (strain KBAB4) (Bacillus weihenstephanensis), this protein is Holliday junction resolvase RecU.